The primary structure comprises 93 residues: Large ribosomal subunit protein uL23cz/uL23cy (93 aa).

The protein belongs to the universal ribosomal protein uL23 family. Part of the 50S ribosomal subunit.

It localises to the plastid. Its subcellular location is the chloroplast. Binds to 23S rRNA. In Panax ginseng (Korean ginseng), this protein is Large ribosomal subunit protein uL23cz/uL23cy (rpl23-A).